Here is a 902-residue protein sequence, read N- to C-terminus: Magnesium-transporting ATPase, P-type 1 (902 aa).

Over 1–98 (MLKIITRQLF…KPSPWWVHLW (98 aa)) the chain is Cytoplasmic. A helical membrane pass occupies residues 99-119 (VCYRNPFNILLTILGGISYAT). Position 120 (glutamate 120) is a topological domain, extracellular. Residues 121-141 (DLFAAGVIALMVGISTLLNFV) form a helical membrane-spanning segment. At 142–291 (QEARSTKAAD…QNAFQKGISR (150 aa)) the chain is on the cytoplasmic side. The chain crosses the membrane as a helical span at residues 292–312 (VSMLLIRFMLVMAPVVLIING). At 313 to 321 (YTKGDWWEA) the chain is on the extracellular side. A helical transmembrane segment spans residues 322–339 (ALFALSVAVGLTPEMLPM). Glutamate 335 is a Mg(2+) binding site. Residues 340 to 699 (IVTSTLARGA…IEGRRTFSNM (360 aa)) are Cytoplasmic-facing. Residue aspartate 377 is the 4-aspartylphosphate intermediate of the active site. The Mg(2+) site is built by aspartate 645, aspartate 649, and asparagine 713. A helical transmembrane segment spans residues 700–719 (LKYIKMTASSNFGNVFSVLV). Topologically, residues 720–728 (ASAFLPFLP) are extracellular. The helical transmembrane segment at 729–748 (MLPLHLLIQNLLYDVSQVAI) threads the bilayer. Asparagine 738 and aspartate 742 together coordinate Mg(2+). Over 749 to 770 (PFDNVDEEQIQKPQRWNPADLG) the chain is Cytoplasmic. A helical membrane pass occupies residues 771-794 (RFMVFFGPISSIFDILTFCLMWWV). Topologically, residues 795-803 (FHANTPETQ) are extracellular. Residues 804 to 822 (TLFQSGWFVVGLLSQTLIV) traverse the membrane as a helical segment. Residues 823–835 (HMIRTRRLPFIQS) are Cytoplasmic-facing. Residues 836–855 (RAAWPLMAMTLLVMVVGVSL) form a helical membrane-spanning segment. Residues 856–870 (PFSPLASYLQLQALP) are Extracellular-facing. A helical transmembrane segment spans residues 871-890 (LSYFPWLIAILVGYMTLTQL). Residues 891–902 (VKGFYSRRYGWQ) are Cytoplasmic-facing.

The protein belongs to the cation transport ATPase (P-type) (TC 3.A.3) family. Type IIIB subfamily.

The protein resides in the cell inner membrane. The catalysed reaction is Mg(2+)(out) + ATP + H2O = Mg(2+)(in) + ADP + phosphate + H(+). Functionally, mediates magnesium influx to the cytosol. This is Magnesium-transporting ATPase, P-type 1 (mgtA) from Salmonella typhimurium (strain 14028s / SGSC 2262).